Consider the following 427-residue polypeptide: Diaminobutyrate--2-oxoglutarate transaminase (427 aa).

N6-(pyridoxal phosphate)lysine is present on Lys-269.

Belongs to the class-III pyridoxal-phosphate-dependent aminotransferase family. Pyridoxal 5'-phosphate serves as cofactor.

It catalyses the reaction L-2,4-diaminobutanoate + 2-oxoglutarate = L-aspartate 4-semialdehyde + L-glutamate. It participates in amine and polyamine biosynthesis; ectoine biosynthesis; L-ectoine from L-aspartate 4-semialdehyde: step 1/3. Its function is as follows. Catalyzes reversively the conversion of L-aspartate beta-semialdehyde (ASA) to L-2,4-diaminobutyrate (DABA) by transamination with L-glutamate. The protein is Diaminobutyrate--2-oxoglutarate transaminase (ectB) of Halalkalibacterium halodurans (strain ATCC BAA-125 / DSM 18197 / FERM 7344 / JCM 9153 / C-125) (Bacillus halodurans).